Here is a 1434-residue protein sequence, read N- to C-terminus: DNA-directed RNA polymerase subunit beta' (1434 aa).

Zn(2+) contacts are provided by Cys-70, Cys-72, Cys-85, and Cys-88. Asp-460, Asp-462, and Asp-464 together coordinate Mg(2+). 4 residues coordinate Zn(2+): Cys-840, Cys-914, Cys-921, and Cys-924.

The protein belongs to the RNA polymerase beta' chain family. As to quaternary structure, the RNAP catalytic core consists of 2 alpha, 1 beta, 1 beta' and 1 omega subunit. When a sigma factor is associated with the core the holoenzyme is formed, which can initiate transcription. Requires Mg(2+) as cofactor. The cofactor is Zn(2+).

It carries out the reaction RNA(n) + a ribonucleoside 5'-triphosphate = RNA(n+1) + diphosphate. In terms of biological role, DNA-dependent RNA polymerase catalyzes the transcription of DNA into RNA using the four ribonucleoside triphosphates as substrates. This chain is DNA-directed RNA polymerase subunit beta', found in Tolumonas auensis (strain DSM 9187 / NBRC 110442 / TA 4).